Consider the following 275-residue polypeptide: F420-dependent methylenetetrahydromethanopterin dehydrogenase (275 aa).

This sequence belongs to the MTD family.

The enzyme catalyses 5,10-methylenetetrahydromethanopterin + oxidized coenzyme F420-(gamma-L-Glu)(n) + 2 H(+) = 5,10-methenyl-5,6,7,8-tetrahydromethanopterin + reduced coenzyme F420-(gamma-L-Glu)(n). The protein operates within one-carbon metabolism; methanogenesis from CO(2); 5,10-methylene-5,6,7,8-tetrahydromethanopterin from 5,10-methenyl-5,6,7,8-tetrahydromethanopterin (coenzyme F420 route): step 1/1. Functionally, catalyzes the reversible reduction of methenyl-H(4)MPT(+) to methylene-H(4)MPT. This is F420-dependent methylenetetrahydromethanopterin dehydrogenase from Methanobrevibacter smithii (strain ATCC 35061 / DSM 861 / OCM 144 / PS).